We begin with the raw amino-acid sequence, 492 residues long: BTB/POZ domain and ankyrin repeat-containing protein NOOT2 (492 aa).

In terms of domain architecture, BTB spans 25 to 107 (SDVTFQVEGR…LYSGQVSIVP (83 aa)). Residues 113-127 (RPNCGERGCWHTHCT) form a C2HC NPR-type zinc finger. C116, C121, H123, and C126 together coordinate Zn(2+). 4 ANK repeats span residues 248 to 277 (QKIR…LNLD), 278 to 307 (EALA…DVNY), 312 to 341 (AGKT…DPTV), and 345 to 379 (DGVT…KLRL). Disordered regions lie at residues 395-439 (ENNA…NSIG) and 455-492 (TQMG…SHDF). 2 stretches are compositionally biased toward low complexity: residues 397 to 413 (NASN…SSAA) and 425 to 439 (SSSS…NSIG). Positions 461–473 (DDNRHNNSHREAM) are enriched in basic and acidic residues.

Belongs to the plant 'ANKYRIN-BTB/POZ' family. 'NOOT-BOP-COCH-like' (NBCL) subfamily. In terms of assembly, homodimer.

The protein localises to the nucleus. The protein resides in the cytoplasm. It localises to the cell membrane. It functions in the pathway protein modification; protein ubiquitination. Its function is as follows. May act as a substrate-specific adapter of an E3 ubiquitin-protein ligase complex (CUL3-RBX1-BTB) which mediates the ubiquitination and subsequent proteasomal degradation of target proteins. Transcriptional co-regulator involved in the promotion of leaf and floral meristem fate and determinacy. Required for the abscission of senescent organs, probably by regulating the cell wall disorganization in abscission zones (AZs, e.g. pulvini at the base of leaves). Involved in the coordination of the symbiotic nodule developmental program; promotes the formation of root nodules by interacting directly with APP1 to modulate the expression of the nuclear transcription factor Y subunit (NF-YA1), a key nodulin. Involved in the regulation of indeterminate nodule identity in association with NOOT1. This chain is BTB/POZ domain and ankyrin repeat-containing protein NOOT2, found in Medicago truncatula (Barrel medic).